The primary structure comprises 400 residues: Formate-dependent phosphoribosylglycinamide formyltransferase (400 aa).

N(1)-(5-phospho-beta-D-ribosyl)glycinamide contacts are provided by residues 22 to 23 and E82; that span reads EL. ATP contacts are provided by residues R115, K157, 162–167, 197–200, and E205; these read SSGKGQ and EGFI. Residues 120–315 enclose the ATP-grasp domain; that stretch reads RLAAETLGLP…EFELHARAIL (196 aa). Mg(2+)-binding residues include E274 and E286. Residues D293, K362, and 369–370 contribute to the N(1)-(5-phospho-beta-D-ribosyl)glycinamide site; that span reads RR.

This sequence belongs to the PurK/PurT family. Homodimer.

It carries out the reaction N(1)-(5-phospho-beta-D-ribosyl)glycinamide + formate + ATP = N(2)-formyl-N(1)-(5-phospho-beta-D-ribosyl)glycinamide + ADP + phosphate + H(+). The protein operates within purine metabolism; IMP biosynthesis via de novo pathway; N(2)-formyl-N(1)-(5-phospho-D-ribosyl)glycinamide from N(1)-(5-phospho-D-ribosyl)glycinamide (formate route): step 1/1. Involved in the de novo purine biosynthesis. Catalyzes the transfer of formate to 5-phospho-ribosyl-glycinamide (GAR), producing 5-phospho-ribosyl-N-formylglycinamide (FGAR). Formate is provided by PurU via hydrolysis of 10-formyl-tetrahydrofolate. The protein is Formate-dependent phosphoribosylglycinamide formyltransferase of Cupriavidus metallidurans (strain ATCC 43123 / DSM 2839 / NBRC 102507 / CH34) (Ralstonia metallidurans).